Here is a 234-residue protein sequence, read N- to C-terminus: Response regulator RppA (234 aa).

The Response regulatory domain maps to 2–118; sequence RILLVEDETD…ELLARLRALQ (117 aa). Residue Asp-53 is modified to 4-aspartylphosphate. The segment at residues 126-232 is a DNA-binding region (ompR/PhoB-type); it reads PQILTLGNFS…VPGQGYRFTL (107 aa).

In terms of assembly, interacts with histidine kinase Hik2; may accept phosphate from Hik2.

In terms of biological role, member of two-component regulatory system RppA/RppB, involved in the establishment of the appropriate stoichiometry between the 2 photosystems. It senses changes in the plastoquinone (PQ) redox poise. Another group shows this two-component pair, renamed NrsR/NrsS, controls the nickel-dependent expression of the nrsBACD operon; they suggest the photosystem-related activities seen earlier are due to the expression of NrsS (RppB) in the absence of its natural substrate NrsR (RppA). May accept phosphate from Hik2 in a possible Hik2/RppA two-component system. The polypeptide is Response regulator RppA (Synechocystis sp. (strain ATCC 27184 / PCC 6803 / Kazusa)).